The sequence spans 312 residues: Ribose-phosphate pyrophosphokinase (312 aa).

ATP contacts are provided by residues 34-36 (DGE) and 93-94 (RQ). Mg(2+)-binding residues include histidine 128 and aspartate 167. Lysine 191 is an active-site residue. 2 residues coordinate D-ribose 5-phosphate: arginine 193 and aspartate 217.

This sequence belongs to the ribose-phosphate pyrophosphokinase family. Class I subfamily. In terms of assembly, homohexamer. Requires Mg(2+) as cofactor.

It is found in the cytoplasm. It carries out the reaction D-ribose 5-phosphate + ATP = 5-phospho-alpha-D-ribose 1-diphosphate + AMP + H(+). It participates in metabolic intermediate biosynthesis; 5-phospho-alpha-D-ribose 1-diphosphate biosynthesis; 5-phospho-alpha-D-ribose 1-diphosphate from D-ribose 5-phosphate (route I): step 1/1. In terms of biological role, involved in the biosynthesis of the central metabolite phospho-alpha-D-ribosyl-1-pyrophosphate (PRPP) via the transfer of pyrophosphoryl group from ATP to 1-hydroxyl of ribose-5-phosphate (Rib-5-P). The protein is Ribose-phosphate pyrophosphokinase of Baumannia cicadellinicola subsp. Homalodisca coagulata.